The chain runs to 384 residues: Guanine nucleotide-binding protein alpha-2 subunit (384 aa).

Positions 1–23 (MGLVCSRNRRYRDSDPEENAQAA) are disordered. G2 carries N-myristoyl glycine lipidation. A lipid anchor (S-palmitoyl cysteine) is attached at C5. The 347-residue stretch at 38 to 384 (HIQKLLLLGA…RRNLFEAGLL (347 aa)) folds into the G-alpha domain. Residues 41 to 54 (KLLLLGAGESGKST) form a G1 motif region. GTP is bound by residues E49, S50, G51, K52, S53, T54, D163, L188, Y189, T194, G222, N288, K289, D291, and A356. A Mg(2+)-binding site is contributed by S53. The segment at 186-194 (DVLYARVRT) is G2 motif. T194 contacts Mg(2+). The G3 motif stretch occupies residues 215-224 (YRLFDVGGQR). The segment at 284–291 (MLFLNKFD) is G4 motif. Residues 354-359 (TTALDQ) form a G5 motif region.

It belongs to the G-alpha family. As to quaternary structure, g proteins are composed of 3 units; alpha, beta and gamma. The alpha chain contains the guanine nucleotide binding site. The cofactor is Mg(2+).

Guanine nucleotide-binding proteins (G proteins) are involved as modulators or transducers in various transmembrane signaling systems. In Pisum sativum (Garden pea), this protein is Guanine nucleotide-binding protein alpha-2 subunit (GPA2).